Here is a 303-residue protein sequence, read N- to C-terminus: Protoporphyrin uptake protein 1 (303 aa).

At 1–18 the chain is on the extracellular side; that stretch reads MSTTDSGFVLYHYTPSKA. Residues 19 to 39 form a helical membrane-spanning segment; that stretch reads AAIVFVVLFIIMTVIFAVQTL. Residues 40 to 76 lie on the Cytoplasmic side of the membrane; the sequence is YAARKSSKALKNNPFESSDDKVDSLEDAEYKQLKITP. Residues 77 to 97 form a helical membrane-spanning segment; that stretch reads TVFAFIPFFTGCIMEAVGYIG. Over 98 to 111 the chain is Extracellular; sequence RALSSSNPERTTPY. Residues 112–132 form a helical membrane-spanning segment; that stretch reads IIQSVLLLVAPALIAATIYMI. At 133-154 the chain is on the cytoplasmic side; that stretch reads FGRLLHVMRCQSLILISARFGT. Residues 155 to 175 form a helical membrane-spanning segment; sequence TFFVVGDVFSFFLQAAGGGLM. Over 176 to 183 the chain is Extracellular; it reads SKAGSTKT. The helical transmembrane segment at 184–204 threads the bilayer; it reads GSGLITAGLFVQVIFFGFFII. The Cytoplasmic portion of the chain corresponds to 205-226; the sequence is NEIRFTVNVKRRCLFYEDISRK. Residues 227–247 traverse the membrane as a helical segment; the sequence is WIFVNATLLLSSMLILLRSIV. At 248-264 the chain is on the extracellular side; sequence RIVEFIQGFNGYIISHE. Residues 265–285 traverse the membrane as a helical segment; sequence YFIYVFDAVPMLLVIIAFSVG. Over 286 to 303 the chain is Cytoplasmic; it reads SFFGNVFDVIKECQTLSN.

The protein belongs to the lipid-translocating exporter (LTE) (TC 9.A.26.1) family. N-glycosylated.

The protein localises to the cell membrane. Its function is as follows. Involved in inducible protoporphyrin IX influx and heme efflux. The chain is Protoporphyrin uptake protein 1 (PUG1) from Saccharomyces cerevisiae (strain ATCC 204508 / S288c) (Baker's yeast).